We begin with the raw amino-acid sequence, 282 residues long: Deoxyribonuclease-1 (282 aa).

A signal peptide spans M1–T20. N-linked (GlcNAc...) asparagine glycosylation is present at N38. E98 is a catalytic residue. An intrachain disulfide couples C121 to C124. H154 is a catalytic residue. Cysteines 193 and 229 form a disulfide.

Belongs to the DNase I family. The cofactor is Ca(2+). Mg(2+) serves as cofactor. In terms of processing, N-glycosylated.

It localises to the secreted. It is found in the zymogen granule. Its subcellular location is the nucleus envelope. It carries out the reaction Endonucleolytic cleavage to 5'-phosphodinucleotide and 5'-phosphooligonucleotide end-products.. Serum endocuclease secreted into body fluids by a wide variety of exocrine and endocrine organs. Expressed by non-hematopoietic tissues and preferentially cleaves protein-free DNA. Among other functions, seems to be involved in cell death by apoptosis. Binds specifically to G-actin and blocks actin polymerization. This chain is Deoxyribonuclease-1 (DNASE1), found in Gallus gallus (Chicken).